The chain runs to 205 residues: Urease accessory protein UreG (205 aa).

Position 14 to 21 (14 to 21 (GPVGSGKT)) interacts with GTP.

The protein belongs to the SIMIBI class G3E GTPase family. UreG subfamily. As to quaternary structure, homodimer. UreD, UreF and UreG form a complex that acts as a GTP-hydrolysis-dependent molecular chaperone, activating the urease apoprotein by helping to assemble the nickel containing metallocenter of UreC. The UreE protein probably delivers the nickel.

The protein localises to the cytoplasm. In terms of biological role, facilitates the functional incorporation of the urease nickel metallocenter. This process requires GTP hydrolysis, probably effectuated by UreG. The chain is Urease accessory protein UreG from Escherichia coli O157:H7.